The primary structure comprises 171 residues: Peptide methionine sulfoxide reductase MsrA (171 aa).

Residue Cys-13 is part of the active site.

It belongs to the MsrA Met sulfoxide reductase family.

The catalysed reaction is L-methionyl-[protein] + [thioredoxin]-disulfide + H2O = L-methionyl-(S)-S-oxide-[protein] + [thioredoxin]-dithiol. It catalyses the reaction [thioredoxin]-disulfide + L-methionine + H2O = L-methionine (S)-S-oxide + [thioredoxin]-dithiol. Its function is as follows. Has an important function as a repair enzyme for proteins that have been inactivated by oxidation. Catalyzes the reversible oxidation-reduction of methionine sulfoxide in proteins to methionine. This chain is Peptide methionine sulfoxide reductase MsrA, found in Mycobacterium ulcerans (strain Agy99).